A 490-amino-acid polypeptide reads, in one-letter code: MEGQDEVSAREQHFHSQVRESTICFLLFAILYIVSYFIIIRYKRKSDEQEDEDAVVNRISLFLSTFTLAVSAGAVLLLPFSIISNEILLAFPHNYYIQWLNGSLIHGLWNLASLFSNLCLFVLMPFAFFFLESEGFAGLKKGIRARILETLVMLLLLALLILGMVWVASALIDSDAASMESLYDLWEFYLPYLYSCISLMGCLLLLLCTPVGLSRMFTVMGQLLVKPAILEDLDEQIYMITLEEEALQRRLHGLSSSVEYNVMELEQELENVKILKTKLERRKKASAWERNLVYPAVMVLLLIETSISVLLVACNILCLLVDETAMPKGTRGPGIGSASLSTFGFVGAALEIILIFYLMVSSVVGFYSLRFFGNFTPKKDDTTMTKIIGNCVSILVLSSALPVMSRTLGITRFDLLGDFGRFNWLGNFYIVLSYNLLFAIMTTLCLIRKFTSAVREELFKALGLHKLHLSDTSRDSETTKPSANGHQKAL.

At 1-19 (MEGQDEVSAREQHFHSQVR) the chain is on the extracellular side. A helical membrane pass occupies residues 20–40 (ESTICFLLFAILYIVSYFIII). Over 41 to 62 (RYKRKSDEQEDEDAVVNRISLF) the chain is Cytoplasmic. Residues 63–83 (LSTFTLAVSAGAVLLLPFSII) form a helical membrane-spanning segment. Over 84 to 110 (SNEILLAFPHNYYIQWLNGSLIHGLWN) the chain is Extracellular. Residues 111 to 131 (LASLFSNLCLFVLMPFAFFFL) traverse the membrane as a helical segment. At 132–151 (ESEGFAGLKKGIRARILETL) the chain is on the cytoplasmic side. Residues 152–172 (VMLLLLALLILGMVWVASALI) form a helical membrane-spanning segment. Over 173–187 (DSDAASMESLYDLWE) the chain is Extracellular. A helical transmembrane segment spans residues 188–208 (FYLPYLYSCISLMGCLLLLLC). Over 209 to 291 (TPVGLSRMFT…RKKASAWERN (83 aa)) the chain is Cytoplasmic. The stretch at 256-287 (SSVEYNVMELEQELENVKILKTKLERRKKASA) forms a coiled coil. A helical transmembrane segment spans residues 292 to 312 (LVYPAVMVLLLIETSISVLLV). At 313–339 (ACNILCLLVDETAMPKGTRGPGIGSAS) the chain is on the extracellular side. Residues 340 to 360 (LSTFGFVGAALEIILIFYLMV) traverse the membrane as a helical segment. The Cytoplasmic segment spans residues 361–383 (SSVVGFYSLRFFGNFTPKKDDTT). Residues 384–404 (MTKIIGNCVSILVLSSALPVM) traverse the membrane as a helical segment. Residues 405 to 426 (SRTLGITRFDLLGDFGRFNWLG) lie on the Extracellular side of the membrane. A helical transmembrane segment spans residues 427–447 (NFYIVLSYNLLFAIMTTLCLI). Residues 448–490 (RKFTSAVREELFKALGLHKLHLSDTSRDSETTKPSANGHQKAL) are Cytoplasmic-facing.

Belongs to the LIMR family.

It localises to the membrane. Its function is as follows. Putative membrane receptor. The chain is Limb region 1 protein (Lmbr1) from Mus musculus (Mouse).